Here is a 491-residue protein sequence, read N- to C-terminus: Ketol-acid reductoisomerase (NADP(+)) (491 aa).

Positions 17–208 (LGKCRFMSRD…GGHRAGVLES (192 aa)) constitute a KARI N-terminal Rossmann domain. Residues 45–48 (CGAQ), Arg68, Arg76, Ser78, and 108–110 (DKQ) each bind NADP(+). Residue His132 is part of the active site. Gly158 lines the NADP(+) pocket. KARI C-terminal knotted domains are found at residues 209–344 (SFVA…NYPE) and 345–484 (YEGK…MTDM). Asp217, Glu221, Glu389, and Glu393 together coordinate Mg(2+). Ser414 is a substrate binding site.

Belongs to the ketol-acid reductoisomerase family. It depends on Mg(2+) as a cofactor.

The catalysed reaction is (2R)-2,3-dihydroxy-3-methylbutanoate + NADP(+) = (2S)-2-acetolactate + NADPH + H(+). The enzyme catalyses (2R,3R)-2,3-dihydroxy-3-methylpentanoate + NADP(+) = (S)-2-ethyl-2-hydroxy-3-oxobutanoate + NADPH + H(+). Its pathway is amino-acid biosynthesis; L-isoleucine biosynthesis; L-isoleucine from 2-oxobutanoate: step 2/4. It participates in amino-acid biosynthesis; L-valine biosynthesis; L-valine from pyruvate: step 2/4. In terms of biological role, involved in the biosynthesis of branched-chain amino acids (BCAA). Catalyzes an alkyl-migration followed by a ketol-acid reduction of (S)-2-acetolactate (S2AL) to yield (R)-2,3-dihydroxy-isovalerate. In the isomerase reaction, S2AL is rearranged via a Mg-dependent methyl migration to produce 3-hydroxy-3-methyl-2-ketobutyrate (HMKB). In the reductase reaction, this 2-ketoacid undergoes a metal-dependent reduction by NADPH to yield (R)-2,3-dihydroxy-isovalerate. The protein is Ketol-acid reductoisomerase (NADP(+)) of Proteus mirabilis (strain HI4320).